Here is a 365-residue protein sequence, read N- to C-terminus: Histidinol-phosphate aminotransferase (365 aa).

A disordered region spans residues 1–22 (MSRPVPNPGILDIAPYTPGKSP). The residue at position 221 (Lys-221) is an N6-(pyridoxal phosphate)lysine.

It belongs to the class-II pyridoxal-phosphate-dependent aminotransferase family. Histidinol-phosphate aminotransferase subfamily. As to quaternary structure, homodimer. The cofactor is pyridoxal 5'-phosphate.

The catalysed reaction is L-histidinol phosphate + 2-oxoglutarate = 3-(imidazol-4-yl)-2-oxopropyl phosphate + L-glutamate. Its pathway is amino-acid biosynthesis; L-histidine biosynthesis; L-histidine from 5-phospho-alpha-D-ribose 1-diphosphate: step 7/9. The sequence is that of Histidinol-phosphate aminotransferase from Rhodopseudomonas palustris (strain BisB5).